Reading from the N-terminus, the 478-residue chain is Elongation factor Tu, chloroplastic (478 aa).

Low complexity predominate over residues 1 to 29 (MASISAATATSSTKLVSSNSTNPLLPSST). The disordered stretch occupies residues 1-31 (MASISAATATSSTKLVSSNSTNPLLPSSTKP). Residues 1 to 69 (MASISAATAT…THRHRRFTVR (69 aa)) constitute a chloroplast transit peptide. The region spanning 79–283 (KPHVNIGTIG…AVDSYIPIPV (205 aa)) is the tr-type G domain. Positions 88–95 (GHVDHGKT) are G1. Position 88-95 (88-95 (GHVDHGKT)) interacts with GTP. The G2 stretch occupies residues 129–133 (GITIN). A G3 region spans residues 150–153 (DCPG). Residues 150–154 (DCPGH) and 205–208 (NKQD) each bind GTP. Residues 205 to 208 (NKQD) form a G4 region. Residues 243–245 (SAL) form a G5 region.

It belongs to the TRAFAC class translation factor GTPase superfamily. Classic translation factor GTPase family. EF-Tu/EF-1A subfamily.

The protein resides in the plastid. It is found in the chloroplast. This protein promotes the GTP-dependent binding of aminoacyl-tRNA to the A-site of ribosomes during protein biosynthesis. This chain is Elongation factor Tu, chloroplastic (TUFA), found in Nicotiana tabacum (Common tobacco).